The sequence spans 417 residues: Gamma-glutamyl phosphate reductase (417 aa).

The protein belongs to the gamma-glutamyl phosphate reductase family.

The protein localises to the cytoplasm. The catalysed reaction is L-glutamate 5-semialdehyde + phosphate + NADP(+) = L-glutamyl 5-phosphate + NADPH + H(+). It participates in amino-acid biosynthesis; L-proline biosynthesis; L-glutamate 5-semialdehyde from L-glutamate: step 2/2. Catalyzes the NADPH-dependent reduction of L-glutamate 5-phosphate into L-glutamate 5-semialdehyde and phosphate. The product spontaneously undergoes cyclization to form 1-pyrroline-5-carboxylate. In Pectobacterium carotovorum subsp. carotovorum (strain PC1), this protein is Gamma-glutamyl phosphate reductase.